The sequence spans 178 residues: MAELTTLARPYAKAAFEFAQAANQLQSWYEALEVSAAVAAQEQVKKALAASALSAQQKASVFVQVCGDQLDEKQQNFIRTLASNKRLALLPYIKELFARMKAQQEKTIDVEVTAAYELPVDLINKLAQALSAKLDRNVSVHSSINKSLLGGVVIHTGDTVIDGSVRGRLAKLAEALKS.

Belongs to the ATPase delta chain family. As to quaternary structure, F-type ATPases have 2 components, F(1) - the catalytic core - and F(0) - the membrane proton channel. F(1) has five subunits: alpha(3), beta(3), gamma(1), delta(1), epsilon(1). F(0) has three main subunits: a(1), b(2) and c(10-14). The alpha and beta chains form an alternating ring which encloses part of the gamma chain. F(1) is attached to F(0) by a central stalk formed by the gamma and epsilon chains, while a peripheral stalk is formed by the delta and b chains.

Its subcellular location is the cell inner membrane. Its function is as follows. F(1)F(0) ATP synthase produces ATP from ADP in the presence of a proton or sodium gradient. F-type ATPases consist of two structural domains, F(1) containing the extramembraneous catalytic core and F(0) containing the membrane proton channel, linked together by a central stalk and a peripheral stalk. During catalysis, ATP synthesis in the catalytic domain of F(1) is coupled via a rotary mechanism of the central stalk subunits to proton translocation. Functionally, this protein is part of the stalk that links CF(0) to CF(1). It either transmits conformational changes from CF(0) to CF(1) or is implicated in proton conduction. This is ATP synthase subunit delta from Cellvibrio japonicus (strain Ueda107) (Pseudomonas fluorescens subsp. cellulosa).